The chain runs to 388 residues: Probable tRNA sulfurtransferase (388 aa).

The region spanning 55–162 (VTLDDKLKKI…PEGVLIFTDR (108 aa)) is the THUMP domain. Residues 180–181 (LL), 205–206 (TF), Arg264, Gly286, and Gln295 contribute to the ATP site.

The protein belongs to the ThiI family.

It localises to the cytoplasm. It catalyses the reaction [ThiI sulfur-carrier protein]-S-sulfanyl-L-cysteine + a uridine in tRNA + 2 reduced [2Fe-2S]-[ferredoxin] + ATP + H(+) = [ThiI sulfur-carrier protein]-L-cysteine + a 4-thiouridine in tRNA + 2 oxidized [2Fe-2S]-[ferredoxin] + AMP + diphosphate. The enzyme catalyses [ThiS sulfur-carrier protein]-C-terminal Gly-Gly-AMP + S-sulfanyl-L-cysteinyl-[cysteine desulfurase] + AH2 = [ThiS sulfur-carrier protein]-C-terminal-Gly-aminoethanethioate + L-cysteinyl-[cysteine desulfurase] + A + AMP + 2 H(+). The protein operates within cofactor biosynthesis; thiamine diphosphate biosynthesis. Catalyzes the ATP-dependent transfer of a sulfur to tRNA to produce 4-thiouridine in position 8 of tRNAs, which functions as a near-UV photosensor. Also catalyzes the transfer of sulfur to the sulfur carrier protein ThiS, forming ThiS-thiocarboxylate. This is a step in the synthesis of thiazole, in the thiamine biosynthesis pathway. The sulfur is donated as persulfide by IscS. This is Probable tRNA sulfurtransferase from Thermotoga maritima (strain ATCC 43589 / DSM 3109 / JCM 10099 / NBRC 100826 / MSB8).